The following is a 264-amino-acid chain: Mannose-specific lectin CEA (264 aa).

An N-terminal signal peptide occupies residues 1-23 (MAKLLLFLLPAILGLLVPRSAVA). Bulb-type lectin domains lie at 26–131 (TNYL…PWVP) and 145–252 (NNLL…PQAK). Residues 51–55 (QDDCN), Tyr59, Trp63, Gln64, 170–174 (QGDCN), Tyr178, and 182–185 (YGWQ) each bind beta-D-mannose. The Carbohydrate-binding motif 1 signature appears at 51-59 (QDDCNLVLY). Disulfide bonds link Cys54–Cys74 and Cys173–Cys195. The Carbohydrate-binding motif 2 motif lies at 170-178 (QGDCNLVLY).

In terms of assembly, forms heterotetramer of 2 chains 1 and 2 chains 2 arranged as a dimer of chain 1 and chain 2 heterodimers.

It localises to the secreted. In terms of biological role, mannose-specific lectin. Shows agglutinating activity towards erythrocytes from rabbit. Has insecticidal activity against cotton aphids and other hemipteran insects. The sequence is that of Mannose-specific lectin CEA from Colocasia esculenta (Wild taro).